A 148-amino-acid polypeptide reads, in one-letter code: UPF0179 protein VNG_1401C (148 aa).

Belongs to the UPF0179 family.

The protein is UPF0179 protein VNG_1401C of Halobacterium salinarum (strain ATCC 700922 / JCM 11081 / NRC-1) (Halobacterium halobium).